Here is a 132-residue protein sequence, read N- to C-terminus: MTMTDPVADMLTRLRNANSAYHDTVSMPYSKLKARVADILKAEGYIAGWKEEDAEVGKKLTIDLKFGPNRERSIAGVRRISKPGLRVYAKSTNLPHVLGGLGIAILSTSSGLLTDKQAGKKGVGGEVLAYVW.

It belongs to the universal ribosomal protein uS8 family. Part of the 30S ribosomal subunit. Contacts proteins S5 and S12.

Functionally, one of the primary rRNA binding proteins, it binds directly to 16S rRNA central domain where it helps coordinate assembly of the platform of the 30S subunit. The protein is Small ribosomal subunit protein uS8 of Paenarthrobacter aurescens (strain TC1).